The primary structure comprises 341 residues: MASSDKQTSPKPPPSPSPLRNSKFCQSNMRILISGGAGFIGSHLVDKLMENEKNEVIVADNYFTGSKDNLKKWIGHPRFELIRHDVTEPLLIEVDQIYHLACPASPIFYKYNPVKTIKTNVIGTLNMLGLAKRVGARILLTSTSEVYGDPLIHPQPESYWGNVNPIGVRSCYDEGKRVAETLMFDYHRQHGIEIRIARIFNTYGPRMNIDDGRVVSNFIAQALRGEALTVQKPGTQTRSFCYVSDMVDGLMRLMEGDDTGPINIGNPGEFTMVELAETVKELINPSIEIKMVENTPDDPRQRKPDITKAKEVLGWEPKVKLREGLPLMEEDFRLRLGVHKN.

The segment at 1 to 21 is disordered; that stretch reads MASSDKQTSPKPPPSPSPLRN. Residue 60–85 participates in NAD(+) binding; that stretch reads DNYFTGSKDNLKKWIGHPRFELIRHD. Arg169 contributes to the substrate binding site. Tyr172 acts as the Proton acceptor in catalysis. 172 to 176 contributes to the NAD(+) binding site; that stretch reads YDEGK. Substrate is bound at residue Asn201. Arg213 lines the NAD(+) pocket. Substrate is bound by residues 214–218, 231–238, and 298–302; these read VVSNF, QKPGTQTR, and DPRQR.

Belongs to the NAD(P)-dependent epimerase/dehydratase family. UDP-glucuronic acid decarboxylase subfamily. It depends on NAD(+) as a cofactor.

The protein resides in the cytoplasm. It carries out the reaction UDP-alpha-D-glucuronate + H(+) = UDP-alpha-D-xylose + CO2. Its pathway is nucleotide-sugar biosynthesis; UDP-alpha-D-xylose biosynthesis; UDP-alpha-D-xylose from UDP-alpha-D-glucuronate: step 1/1. Its function is as follows. Catalyzes the NAD-dependent decarboxylation of UDP-glucuronic acid to UDP-xylose. Necessary for the biosynthesis of the core tetrasaccharide in glycosaminoglycan biosynthesis. This Arabidopsis thaliana (Mouse-ear cress) protein is UDP-glucuronic acid decarboxylase 5 (UXS5).